Reading from the N-terminus, the 474-residue chain is Dihydrolipoyl dehydrogenase (474 aa).

FAD is bound by residues 34–42 (EKEKLGGTC), lysine 51, and glycine 114. An intrachain disulfide couples cysteine 42 to cysteine 47. NAD(+) is bound by residues 188–192 (GGGVI), glutamate 211, valine 245, and 278–281 (SIGR). The FAD site is built by aspartate 320 and alanine 328. The Proton acceptor role is filled by histidine 453.

It belongs to the class-I pyridine nucleotide-disulfide oxidoreductase family. Homodimer. It depends on FAD as a cofactor.

The protein resides in the cytoplasm. It catalyses the reaction N(6)-[(R)-dihydrolipoyl]-L-lysyl-[protein] + NAD(+) = N(6)-[(R)-lipoyl]-L-lysyl-[protein] + NADH + H(+). In terms of biological role, the branched-chain alpha-keto dehydrogenase complex catalyzes the overall conversion of alpha-keto acids to acyl-CoA and CO(2). It contains multiple copies of 3 enzymatic components: branched-chain alpha-keto acid decarboxylase (E1), lipoamide acyltransferase (E2) and lipoamide dehydrogenase (E3). This chain is Dihydrolipoyl dehydrogenase (bfmBC), found in Bacillus subtilis (strain 168).